A 301-amino-acid polypeptide reads, in one-letter code: Structure-specific endonuclease subunit SLX1 (301 aa).

A GIY-YIG domain is found at 12-95 (AFYCCYLLRS…QHPYQTRFIK (84 aa)). An SLX1-type zinc finger spans residues 216-283 (CAICEKIVDY…IPTSGQCPNC (68 aa)).

Belongs to the SLX1 family. Forms a heterodimer with SLX4. The cofactor is a divalent metal cation.

It localises to the nucleus. Its function is as follows. Catalytic subunit of the SLX1-SLX4 structure-specific endonuclease that resolves DNA secondary structures generated during DNA repair and recombination. Has endonuclease activity towards branched DNA substrates, introducing single-strand cuts in duplex DNA close to junctions with ss-DNA. The polypeptide is Structure-specific endonuclease subunit SLX1 (Eremothecium gossypii (strain ATCC 10895 / CBS 109.51 / FGSC 9923 / NRRL Y-1056) (Yeast)).